The chain runs to 323 residues: Methionyl-tRNA formyltransferase (323 aa).

Position 118–121 (118–121 (SLLP)) interacts with (6S)-5,6,7,8-tetrahydrofolate.

It belongs to the Fmt family.

The catalysed reaction is L-methionyl-tRNA(fMet) + (6R)-10-formyltetrahydrofolate = N-formyl-L-methionyl-tRNA(fMet) + (6S)-5,6,7,8-tetrahydrofolate + H(+). Its function is as follows. Attaches a formyl group to the free amino group of methionyl-tRNA(fMet). The formyl group appears to play a dual role in the initiator identity of N-formylmethionyl-tRNA by promoting its recognition by IF2 and preventing the misappropriation of this tRNA by the elongation apparatus. The protein is Methionyl-tRNA formyltransferase of Buchnera aphidicola subsp. Baizongia pistaciae (strain Bp).